Consider the following 79-residue polypeptide: Potassium channel toxin Hge-beta-KTx (79 aa).

The first 21 residues, 1-21 (MAKSFFAAFLIIMLISSLVDG), serve as a signal peptide directing secretion. In terms of domain architecture, BetaSPN-type CS-alpha/beta spans 48 to 79 (EYMCPVVSSFCKQHCARLGKSGQCDLLECICS). Intrachain disulfides connect Cys51/Cys71, Cys58/Cys76, and Cys62/Cys78.

Expressed by the venom gland.

It is found in the secreted. In terms of biological role, the full peptide presents antibacterial and cytotoxic activities. The synthetic C-terminus (AA 33-76) inhibits voltage-gated potassium channels Kv1.1/KCNA1, Kv1.2/KCNA2, and Kv1.3/KCNA3. The polypeptide is Potassium channel toxin Hge-beta-KTx (Hoffmannihadrurus gertschi (Scorpion)).